The sequence spans 193 residues: DNA dC-&gt;dU-editing enzyme APOBEC-3H (193 aa).

Positions 24–126 (YRRKTYLCYQ…WKYQQGLRHL (103 aa)) constitute a CMP/dCMP-type deaminase domain. Histidine 54 is a Zn(2+) binding site. Glutamate 56 functions as the Proton donor in the catalytic mechanism. Zn(2+) is bound by residues cysteine 85 and cysteine 88.

The protein belongs to the cytidine and deoxycytidylate deaminase family. As to quaternary structure, homodimer. It depends on Zn(2+) as a cofactor. In terms of tissue distribution, expressed in peripheral blood mononuclear cells.

The protein resides in the cytoplasm. The enzyme catalyses a 2'-deoxycytidine in single-stranded DNA + H2O + H(+) = a 2'-deoxyuridine in single-stranded DNA + NH4(+). DNA deaminase (cytidine deaminase) which acts as an inhibitor of retrovirus replication and retrotransposon mobility via deaminase-dependent and -independent mechanisms. Selectively targets single-stranded DNA and does not deaminate double-stranded DNA or single- or double-stranded RNA. Exhibits single-stranded DNA deaminase activity (in vitro). Incorporates into the released virions of the virion infectivity factor (vif)-deficient feline immunodeficiency virus (FIV) and suppresses FIV infectivity, probably in a deaminase-dependent manner (in vitro). Induces G-to-A hypermutations in vif-deficient FIV (in vitro). The APOBEC3H/APOBEC3Z3 haplotype 5 exhibits antiviral activity against vif-proficient FIV, strains Petaluma, C36 and Shizuoka (in vitro). Does not exhibit inhibitory activity against feline leukemia virus (FeLV), feline endogenous retrovirus (RD-114 virus) or a long interspersed nuclear element-1 (LINE-1) retrotransposon (in vitro). This chain is DNA dC-&gt;dU-editing enzyme APOBEC-3H, found in Felis catus (Cat).